The following is a 351-amino-acid chain: Ion-translocating oxidoreductase complex subunit D (351 aa).

Helical transmembrane passes span 20-40 (IMLL…YFFG), 44-64 (LIQV…TLSL), 89-109 (LPPL…IIIA), and 123-143 (PAMI…TSWL). An FMN phosphoryl threonine modification is found at threonine 187. 5 helical membrane passes run 215–235 (LSGI…LFLL), 244–264 (IPVS…VIAP), 267–287 (FAPP…FFIA), 301–321 (LIFG…GGYP), and 322–342 (DGVA…DYYT).

It belongs to the NqrB/RnfD family. The complex is composed of six subunits: RnfA, RnfB, RnfC, RnfD, RnfE and RnfG. Requires FMN as cofactor.

The protein resides in the cell inner membrane. In terms of biological role, part of a membrane-bound complex that couples electron transfer with translocation of ions across the membrane. This Pectobacterium carotovorum subsp. carotovorum (strain PC1) protein is Ion-translocating oxidoreductase complex subunit D.